Here is a 154-residue protein sequence, read N- to C-terminus: Myoglobin (154 aa).

The Globin domain maps to 2–148 (GLSDGEWQLV…FRNDMAAKYK (147 aa)). Residue serine 4 is modified to Phosphoserine. Histidine 65 is a nitrite binding site. Histidine 65 contacts O2. At threonine 68 the chain carries Phosphothreonine. Residue histidine 94 participates in heme b binding.

This sequence belongs to the globin family. Monomeric.

Its subcellular location is the cytoplasm. It is found in the sarcoplasm. It carries out the reaction Fe(III)-heme b-[protein] + nitric oxide + H2O = Fe(II)-heme b-[protein] + nitrite + 2 H(+). The catalysed reaction is H2O2 + AH2 = A + 2 H2O. In terms of biological role, monomeric heme protein which primary function is to store oxygen and facilitate its diffusion within muscle tissues. Reversibly binds oxygen through a pentacoordinated heme iron and enables its timely and efficient release as needed during periods of heightened demand. Depending on the oxidative conditions of tissues and cells, and in addition to its ability to bind oxygen, it also has a nitrite reductase activity whereby it regulates the production of bioactive nitric oxide. Under stress conditions, like hypoxia and anoxia, it also protects cells against reactive oxygen species thanks to its pseudoperoxidase activity. This Sus scrofa (Pig) protein is Myoglobin (MB).